The primary structure comprises 194 residues: Large ribosomal subunit protein bL27c (194 aa).

The transit peptide at 1-57 (MAVTTSMSFNLMASFRGMSLSSSSSSSFFKGEFGPSSLRLPNKSPLSVSPFPLTIES) directs the protein to the chloroplast. The interval 57–76 (SAHKKGAGSTKNGRDSKGQR) is disordered.

As to quaternary structure, component of the chloroplast large ribosomal subunit (LSU). Mature 70S chloroplast ribosomes of higher plants consist of a small (30S) and a large (50S) subunit. The 30S small subunit contains 1 molecule of ribosomal RNA (16S rRNA) and 24 different proteins. The 50S large subunit contains 3 rRNA molecules (23S, 5S and 4.5S rRNA) and 33 different proteins.

The protein localises to the plastid. It is found in the chloroplast. Component of the chloroplast ribosome (chloro-ribosome), a dedicated translation machinery responsible for the synthesis of chloroplast genome-encoded proteins, including proteins of the transcription and translation machinery and components of the photosynthetic apparatus. The protein is Large ribosomal subunit protein bL27c (RPL27) of Spinacia oleracea (Spinach).